Here is a 106-residue protein sequence, read N- to C-terminus: Phosphoribosyl-ATP pyrophosphatase 1 (106 aa).

The protein belongs to the PRA-PH family.

The protein resides in the cytoplasm. It catalyses the reaction 1-(5-phospho-beta-D-ribosyl)-ATP + H2O = 1-(5-phospho-beta-D-ribosyl)-5'-AMP + diphosphate + H(+). It functions in the pathway amino-acid biosynthesis; L-histidine biosynthesis; L-histidine from 5-phospho-alpha-D-ribose 1-diphosphate: step 2/9. In Bradyrhizobium diazoefficiens (strain JCM 10833 / BCRC 13528 / IAM 13628 / NBRC 14792 / USDA 110), this protein is Phosphoribosyl-ATP pyrophosphatase 1 (hisE1).